Reading from the N-terminus, the 118-residue chain is Large ribosomal subunit protein bL19 (118 aa).

The protein belongs to the bacterial ribosomal protein bL19 family.

This protein is located at the 30S-50S ribosomal subunit interface and may play a role in the structure and function of the aminoacyl-tRNA binding site. The chain is Large ribosomal subunit protein bL19 from Wolinella succinogenes (strain ATCC 29543 / DSM 1740 / CCUG 13145 / JCM 31913 / LMG 7466 / NCTC 11488 / FDC 602W) (Vibrio succinogenes).